Consider the following 228-residue polypeptide: Thymidylate kinase (228 aa).

ATP is bound at residue 20-27; that stretch reads GGEGSGKS.

It belongs to the thymidylate kinase family.

It catalyses the reaction dTMP + ATP = dTDP + ADP. Phosphorylation of dTMP to form dTDP in both de novo and salvage pathways of dTTP synthesis. The sequence is that of Thymidylate kinase from Afipia carboxidovorans (strain ATCC 49405 / DSM 1227 / KCTC 32145 / OM5) (Oligotropha carboxidovorans).